The following is a 166-amino-acid chain: Signal peptidase complex catalytic subunit SEC11 (166 aa).

Residues 1–9 are Cytoplasmic-facing; sequence MNIRQQLTQ. The chain crosses the membrane as a helical; Signal-anchor for type II membrane protein span at residues 10–30; it reads LLTLGYVFASAFMLWKTLSVV. The Lumenal segment spans residues 31-166; that stretch reads ANLHSPIVVV…LGLSSLFSNE (136 aa). Catalysis depends on charge relay system residues Ser-44, His-83, and Asp-108. Residues 152-163 are C-terminal short (CTS) helix; the sequence is GLLGLLGLSSLF.

It belongs to the peptidase S26B family. As to quaternary structure, component of the signal peptidase complex (SPC) composed of a catalytic subunit SEC11 and three accessory subunits SPC1, SPC2 and SPC3. The complex induces a local thinning of the ER membrane which is used to measure the length of the signal peptide (SP) h-region of protein substrates. This ensures the selectivity of the complex towards h-regions shorter than 18-20 amino acids. SPC associates with the translocon complex.

The protein localises to the endoplasmic reticulum membrane. The enzyme catalyses Cleavage of hydrophobic, N-terminal signal or leader sequences from secreted and periplasmic proteins.. Functionally, catalytic component of the signal peptidase complex (SPC) which catalyzes the cleavage of N-terminal signal sequences from nascent proteins as they are translocated into the lumen of the endoplasmic reticulum. Specifically cleaves N-terminal signal peptides that contain a hydrophobic alpha-helix (h-region) shorter than 18-20 amino acids. In Lodderomyces elongisporus (strain ATCC 11503 / CBS 2605 / JCM 1781 / NBRC 1676 / NRRL YB-4239) (Yeast), this protein is Signal peptidase complex catalytic subunit SEC11 (SEC11).